A 298-amino-acid chain; its full sequence is Lipoyl synthase (298 aa).

Cysteine 40, cysteine 45, cysteine 51, cysteine 67, cysteine 71, cysteine 74, and serine 280 together coordinate [4Fe-4S] cluster. The Radical SAM core domain occupies 53–269 (AVRKTATFMI…KEIALSKGFS (217 aa)).

It belongs to the radical SAM superfamily. Lipoyl synthase family. [4Fe-4S] cluster serves as cofactor.

Its subcellular location is the cytoplasm. It carries out the reaction [[Fe-S] cluster scaffold protein carrying a second [4Fe-4S](2+) cluster] + N(6)-octanoyl-L-lysyl-[protein] + 2 oxidized [2Fe-2S]-[ferredoxin] + 2 S-adenosyl-L-methionine + 4 H(+) = [[Fe-S] cluster scaffold protein] + N(6)-[(R)-dihydrolipoyl]-L-lysyl-[protein] + 4 Fe(3+) + 2 hydrogen sulfide + 2 5'-deoxyadenosine + 2 L-methionine + 2 reduced [2Fe-2S]-[ferredoxin]. Its pathway is protein modification; protein lipoylation via endogenous pathway; protein N(6)-(lipoyl)lysine from octanoyl-[acyl-carrier-protein]. Functionally, catalyzes the radical-mediated insertion of two sulfur atoms into the C-6 and C-8 positions of the octanoyl moiety bound to the lipoyl domains of lipoate-dependent enzymes, thereby converting the octanoylated domains into lipoylated derivatives. The protein is Lipoyl synthase of Bacillus cereus (strain B4264).